Reading from the N-terminus, the 349-residue chain is Protein RecA (349 aa).

ATP is bound at residue 66-73 (GPESSGKT).

Belongs to the RecA family.

It localises to the cytoplasm. Can catalyze the hydrolysis of ATP in the presence of single-stranded DNA, the ATP-dependent uptake of single-stranded DNA by duplex DNA, and the ATP-dependent hybridization of homologous single-stranded DNAs. It interacts with LexA causing its activation and leading to its autocatalytic cleavage. The protein is Protein RecA of Psychrobacter sp. (strain PRwf-1).